A 470-amino-acid polypeptide reads, in one-letter code: Argininosuccinate lyase (470 aa).

This sequence belongs to the lyase 1 family. Argininosuccinate lyase subfamily.

The protein localises to the cytoplasm. It carries out the reaction 2-(N(omega)-L-arginino)succinate = fumarate + L-arginine. Its pathway is amino-acid biosynthesis; L-arginine biosynthesis; L-arginine from L-ornithine and carbamoyl phosphate: step 3/3. In Mycobacterium tuberculosis (strain CDC 1551 / Oshkosh), this protein is Argininosuccinate lyase.